A 430-amino-acid polypeptide reads, in one-letter code: Enolase (430 aa).

Glutamine 163 contributes to the (2R)-2-phosphoglycerate binding site. The active-site Proton donor is the glutamate 205. Residues aspartate 242, glutamate 286, and aspartate 313 each contribute to the Mg(2+) site. 4 residues coordinate (2R)-2-phosphoglycerate: lysine 338, arginine 367, serine 368, and lysine 389. Lysine 338 (proton acceptor) is an active-site residue.

Belongs to the enolase family. Mg(2+) is required as a cofactor.

Its subcellular location is the cytoplasm. The protein resides in the secreted. It is found in the cell surface. The enzyme catalyses (2R)-2-phosphoglycerate = phosphoenolpyruvate + H2O. It functions in the pathway carbohydrate degradation; glycolysis; pyruvate from D-glyceraldehyde 3-phosphate: step 4/5. Functionally, catalyzes the reversible conversion of 2-phosphoglycerate (2-PG) into phosphoenolpyruvate (PEP). It is essential for the degradation of carbohydrates via glycolysis. The polypeptide is Enolase (Symbiobacterium thermophilum (strain DSM 24528 / JCM 14929 / IAM 14863 / T)).